The following is a 355-amino-acid chain: Mitochondrial import inner membrane translocase subunit TIM50 (355 aa).

The N-terminal 44 residues, 1–44 (MAASAAVFLRLRSGLRQGARGLCARLATPPPRAPDQAAEIGSRA), are a transit peptide targeting the mitochondrion. A disordered region spans residues 25 to 61 (RLATPPPRAPDQAAEIGSRAGTKAQTQGPQQQRSSEG). The Mitochondrial matrix portion of the chain corresponds to 45 to 67 (GTKAQTQGPQQQRSSEGPSYAKK). A compositionally biased stretch (polar residues) spans 47–61 (KAQTQGPQQQRSSEG). A helical transmembrane segment spans residues 68–88 (VALWLARLLGAGGTVSVIYIF). The Mitochondrial intermembrane portion of the chain corresponds to 89-355 (GNNAVDENGA…SRLWPRSKQP (267 aa)). Residues 145–288 (YYQPPYTLVL…LDLSAFLKTI (144 aa)) enclose the FCP1 homology domain. Residue serine 343 is modified to Phosphoserine.

Belongs to the TIM50 family. Component of the TIM23 complex at least composed of TIMM23, TIMM17 (TIMM17A or TIMM17B) and TIMM50; within this complex, directly interacts with TIMM23. The complex interacts with the TIMM44 component of the PAM complex and with DNAJC15.

It is found in the mitochondrion inner membrane. Functionally, essential component of the TIM23 complex, a complex that mediates the translocation of transit peptide-containing proteins across the mitochondrial inner membrane. Has some phosphatase activity in vitro; however such activity may not be relevant in vivo. This chain is Mitochondrial import inner membrane translocase subunit TIM50 (TIMM50), found in Bos taurus (Bovine).